Reading from the N-terminus, the 444-residue chain is Trigger factor (444 aa).

Residues 166-251 enclose the PPIase FKBP-type domain; that stretch reads GDQVVIDFEG…VHAVKAPKPA (86 aa).

Belongs to the FKBP-type PPIase family. Tig subfamily.

The protein resides in the cytoplasm. The enzyme catalyses [protein]-peptidylproline (omega=180) = [protein]-peptidylproline (omega=0). Its function is as follows. Involved in protein export. Acts as a chaperone by maintaining the newly synthesized protein in an open conformation. Functions as a peptidyl-prolyl cis-trans isomerase. The sequence is that of Trigger factor (tig) from Rhodobacter capsulatus (strain ATCC BAA-309 / NBRC 16581 / SB1003).